A 762-amino-acid polypeptide reads, in one-letter code: Dolichyl-phosphate-mannose--protein mannosyltransferase 4 (762 aa).

Over residues Met-1–Gly-10 the composition is skewed to basic residues. The tract at residues Met-1–Leu-24 is disordered. Over Met-1–Ser-53 the chain is Lumenal. Residues Phe-54 to Pro-74 form a helical membrane-spanning segment. Residues Lys-75 to Ala-136 lie on the Cytoplasmic side of the membrane. A helical transmembrane segment spans residues Pro-137–Phe-157. Residues Asn-158 to Arg-166 are Lumenal-facing. The chain crosses the membrane as a helical span at residues Ala-167–Thr-187. Over Arg-188 to Leu-189 the chain is Cytoplasmic. Residues Ile-190 to Phe-210 traverse the membrane as a helical segment. Topologically, residues Tyr-211–Gln-217 are lumenal. The chain crosses the membrane as a helical span at residues Pro-218–Ile-238. Residues Ser-239–Tyr-242 are Cytoplasmic-facing. A helical membrane pass occupies residues Val-243–Leu-263. Over Asp-264–Asn-283 the chain is Lumenal. The helical transmembrane segment at Gly-284 to Leu-304 threads the bilayer. Topologically, residues Asn-305–Phe-593 are cytoplasmic. MIR domains follow at residues Ser-331–Pro-391, Gly-399–Leu-458, and Gly-464–Ile-521. The helical transmembrane segment at Ile-594 to Ile-614 threads the bilayer. The Lumenal segment spans residues Val-615–Lys-635. The helical transmembrane segment at Leu-636–Leu-656 threads the bilayer. The Cytoplasmic portion of the chain corresponds to Met-657–Thr-716. Residues Val-717–Val-737 traverse the membrane as a helical segment. The Lumenal segment spans residues Tyr-738–Lys-762. Asn-759 is a glycosylation site (N-linked (GlcNAc...) asparagine).

It belongs to the glycosyltransferase 39 family. Forms a functional homodimer and may form a heterodimer with PMT6. Interacts with RCR1.

The protein resides in the endoplasmic reticulum membrane. The enzyme catalyses a di-trans,poly-cis-dolichyl beta-D-mannosyl phosphate + L-seryl-[protein] = 3-O-(alpha-D-mannosyl)-L-seryl-[protein] + a di-trans,poly-cis-dolichyl phosphate + H(+). It catalyses the reaction a di-trans,poly-cis-dolichyl beta-D-mannosyl phosphate + L-threonyl-[protein] = 3-O-(alpha-D-mannosyl)-L-threonyl-[protein] + a di-trans,poly-cis-dolichyl phosphate + H(+). Its pathway is protein modification; protein glycosylation. Functionally, protein O-mannosyltransferase involved in O-glycosylation which is essential for cell wall rigidity. Forms a homodimeric complex to transfer mannose from Dol-P-mannose to Ser or Thr residues on proteins. Specifically acts on secretory proteins with an ER-luminally oriented Ser/Thr-rich region flanked by a membrane anchor such as FUS1, AXL2, GAS1, KEX2, MID2, WSC1, WSC2, OPY2, PRM5, RAX2, or YNL176. The protein is Dolichyl-phosphate-mannose--protein mannosyltransferase 4 of Saccharomyces cerevisiae (strain ATCC 204508 / S288c) (Baker's yeast).